Consider the following 500-residue polypeptide: Glycerol kinase (500 aa).

Thr-14 contacts ADP. ATP is bound by residues Thr-14, Thr-15, and Ser-16. Thr-14 lines the sn-glycerol 3-phosphate pocket. ADP is bound at residue Arg-18. Sn-glycerol 3-phosphate-binding residues include Arg-84, Glu-85, and Tyr-136. Arg-84, Glu-85, and Tyr-136 together coordinate glycerol. His-232 carries the phosphohistidine; by HPr modification. Asp-246 lines the sn-glycerol 3-phosphate pocket. Asp-246 and Gln-247 together coordinate glycerol. 2 residues coordinate ADP: Thr-268 and Gly-311. Residues Thr-268, Gly-311, Gln-315, and Gly-412 each contribute to the ATP site. 2 residues coordinate ADP: Gly-412 and Asn-416.

This sequence belongs to the FGGY kinase family. As to quaternary structure, homotetramer and homodimer (in equilibrium). Post-translationally, the phosphoenolpyruvate-dependent sugar phosphotransferase system (PTS), including enzyme I, and histidine-containing protein (HPr) are required for the phosphorylation, which leads to the activation of the enzyme.

It carries out the reaction glycerol + ATP = sn-glycerol 3-phosphate + ADP + H(+). It participates in polyol metabolism; glycerol degradation via glycerol kinase pathway; sn-glycerol 3-phosphate from glycerol: step 1/1. Its activity is regulated as follows. Activated by phosphorylation and inhibited by fructose 1,6-bisphosphate (FBP). Its function is as follows. Key enzyme in the regulation of glycerol uptake and metabolism. Catalyzes the phosphorylation of glycerol to yield sn-glycerol 3-phosphate. This Streptococcus uberis (strain ATCC BAA-854 / 0140J) protein is Glycerol kinase.